The sequence spans 334 residues: Cytoskeleton protein RodZ (334 aa).

Over 1–111 (MNTEATHDQN…LGKRRKKRDG (111 aa)) the chain is Cytoplasmic. The 53-residue stretch at 19–71 (LRNAREQLGLSQQAVAERLCLKVSTVRDIEEDKAPSDLASTFLRGYIRSYARL) folds into the HTH cro/C1-type domain. A DNA-binding region (H-T-H motif) is located at residues 30 to 49 (QQAVAERLCLKVSTVRDIEE). The helical; Signal-anchor for type II membrane protein transmembrane segment at 112 to 132 (WLMSFTWLVLFVVVGLTGAWW) threads the bilayer. Topologically, residues 133–334 (WQNHKAQQEE…TLNAEPTPAQ (202 aa)) are periplasmic. A disordered region spans residues 155-241 (NADKDSGQSV…PSALPTSQAG (87 aa)). The segment covering 161 to 175 (GQSVPLDTGAVTSQD) has biased composition (polar residues). 2 stretches are compositionally biased toward low complexity: residues 176–211 (TTPA…TVVA) and 219–241 (TAAT…SQAG).

Belongs to the RodZ family.

It localises to the cell inner membrane. Functionally, cytoskeletal protein that is involved in cell-shape control through regulation of the length of the long axis. The chain is Cytoskeleton protein RodZ from Salmonella dublin (strain CT_02021853).